Reading from the N-terminus, the 99-residue chain is Prostate and testis expressed protein 4 (99 aa).

The N-terminal stretch at 1–23 (MNSVTKISTLLIVILSFLCFVEG) is a signal peptide. The UPAR/Ly6 domain maps to 24 to 99 (LICNSCEKSR…CCEKNLCNSF (76 aa)). Intrachain disulfides connect C26–C52, C29–C37, C44–C70, and C74–C90.

Expressed in prostate, testis, eye, kidney and skeletal muscle. Expressed in the dorsal lobe of prostate. Not expressed in the ventral lobe of prostate.

The protein resides in the secreted. Enhances sperm motility. Binds to calmodulin and inhibits calcium transport into spermatozoa. May modulate the function of nicotinic acetylcholine receptors. In Mus musculus (Mouse), this protein is Prostate and testis expressed protein 4 (Pate4).